Reading from the N-terminus, the 289-residue chain is Glycine--tRNA ligase alpha subunit (289 aa).

Belongs to the class-II aminoacyl-tRNA synthetase family. In terms of assembly, tetramer of two alpha and two beta subunits.

It is found in the cytoplasm. The catalysed reaction is tRNA(Gly) + glycine + ATP = glycyl-tRNA(Gly) + AMP + diphosphate. The chain is Glycine--tRNA ligase alpha subunit from Prochlorococcus marinus (strain MIT 9515).